The chain runs to 307 residues: MTETTKTHVILLACGSFNPITKGHIQMFERARDYLHKTGRFIVIGGIVSPVHDSYGKQGLVSSRHRLIMCQLAVQNSDWIRVDPWECYQDTWQTTCSVLEHHRDLMKRVTGCILSNVNTPSMTPVIGQPQNETPQPIYQNSNVPTKPTAAKILGKVGESLSRICCVRPPVERFTFVDENANLGTVMRYEEIELRILLLCGSDLLESFCIPGLWNEADMEVIVGDFGIVVVPRDAADTDRIMNHSSILRKYKNNIMVVKDDINHPMSVVSSTKSRLALQHGDGHVVDYLSQPVIDYILKSQLYINASG.

NAD(+) is bound by residues Ser16 and Phe17. Position 24 (His24) interacts with ATP. Positions 92 and 95 each coordinate NAD(+). Residues Cys164 and Cys165 are each lipidated (S-palmitoyl cysteine). 5 residues coordinate NAD(+): Gly200, Asp202, Leu212, Trp213, and Arg232. 271 to 274 (TKSR) is an ATP binding site.

The protein belongs to the eukaryotic NMN adenylyltransferase family. Monomer. The cofactor is Mg(2+). Degraded in response to injured neurite. Degradation is caused by polyubiquitination by MYCBP2 after recognition by FBXO45. In terms of processing, palmitoylated; palmitoylation is required for membrane association.

It localises to the golgi apparatus membrane. The protein localises to the cytoplasmic vesicle membrane. It is found in the cytoplasm. Its subcellular location is the cell projection. The protein resides in the axon. The catalysed reaction is beta-nicotinamide D-ribonucleotide + ATP + H(+) = diphosphate + NAD(+). It carries out the reaction nicotinate beta-D-ribonucleotide + ATP + H(+) = deamido-NAD(+) + diphosphate. Its pathway is cofactor biosynthesis; NAD(+) biosynthesis; NAD(+) from nicotinamide D-ribonucleotide: step 1/1. It participates in cofactor biosynthesis; NAD(+) biosynthesis; deamido-NAD(+) from nicotinate D-ribonucleotide: step 1/1. With respect to regulation, inhibited by P1-(adenosine-5')-P3-(nicotinamide-riboside-5')-triphosphate (Np3AD) and P1-(adenosine-5')-P4-(nicotinamide-riboside-5')-tetraphosphate (Np4AD). In terms of biological role, nicotinamide/nicotinate-nucleotide adenylyltransferase that acts as an axon maintenance factor. Axon survival factor required for the maintenance of healthy axons: acts by delaying Wallerian axon degeneration, an evolutionarily conserved process that drives the loss of damaged axons. Catalyzes the formation of NAD(+) from nicotinamide mononucleotide (NMN) and ATP. Can also use the deamidated form; nicotinic acid mononucleotide (NaMN) as substrate but with a lower efficiency. Cannot use triazofurin monophosphate (TrMP) as substrate. Also catalyzes the reverse reaction, i.e. the pyrophosphorolytic cleavage of NAD(+). For the pyrophosphorolytic activity prefers NAD(+), NADH and NaAD as substrates and degrades nicotinic acid adenine dinucleotide phosphate (NHD) less effectively. Fails to cleave phosphorylated dinucleotides NADP(+), NADPH and NaADP(+). Also acts as an activator of ADP-ribosylation by supporting the catalytic activity of PARP16 and promoting mono-ADP-ribosylation of ribosomes by PARP16. May be involved in the maintenance of axonal integrity. This is Nicotinamide/nicotinic acid mononucleotide adenylyltransferase 2 (NMNAT2) from Pongo abelii (Sumatran orangutan).